A 442-amino-acid chain; its full sequence is ATP-dependent protease ATPase subunit HslU (442 aa).

ATP contacts are provided by residues Ile18 and 60–65 (GVGKTE). Positions 137-156 (PKPKNDWESTETDSSSNTRQ) are disordered. ATP-binding residues include Asp255, Glu320, and Arg392.

It belongs to the ClpX chaperone family. HslU subfamily. In terms of assembly, a double ring-shaped homohexamer of HslV is capped on each side by a ring-shaped HslU homohexamer. The assembly of the HslU/HslV complex is dependent on binding of ATP.

It localises to the cytoplasm. Functionally, ATPase subunit of a proteasome-like degradation complex; this subunit has chaperone activity. The binding of ATP and its subsequent hydrolysis by HslU are essential for unfolding of protein substrates subsequently hydrolyzed by HslV. HslU recognizes the N-terminal part of its protein substrates and unfolds these before they are guided to HslV for hydrolysis. The protein is ATP-dependent protease ATPase subunit HslU of Shewanella baltica (strain OS155 / ATCC BAA-1091).